A 312-amino-acid chain; its full sequence is Porphobilinogen deaminase (312 aa).

S-(dipyrrolylmethanemethyl)cysteine is present on Cys241.

This sequence belongs to the HMBS family. In terms of assembly, monomer. Dipyrromethane serves as cofactor.

It carries out the reaction 4 porphobilinogen + H2O = hydroxymethylbilane + 4 NH4(+). It functions in the pathway porphyrin-containing compound metabolism; protoporphyrin-IX biosynthesis; coproporphyrinogen-III from 5-aminolevulinate: step 2/4. Its pathway is porphyrin-containing compound metabolism; chlorophyll biosynthesis. Its function is as follows. Tetrapolymerization of the monopyrrole PBG into the hydroxymethylbilane pre-uroporphyrinogen in several discrete steps. The protein is Porphobilinogen deaminase of Chlorobaculum tepidum (strain ATCC 49652 / DSM 12025 / NBRC 103806 / TLS) (Chlorobium tepidum).